Consider the following 358-residue polypeptide: E3 ubiquitin-protein ligase RNF146 (358 aa).

The segment at C36–R74 adopts an RING-type zinc-finger fold. Residues K84 and K94 each participate in a glycyl lysine isopeptide (Lys-Gly) (interchain with G-Cter in ubiquitin) cross-link. A WWE domain is found at E91 to R167. Y107, R110, and W114 together coordinate a glycoprotein. K130 is covalently cross-linked (Glycyl lysine isopeptide (Lys-Gly) (interchain with G-Cter in ubiquitin)). A glycoprotein contacts are provided by Y144, Q153, R163, and K175. Residue K175 forms a Glycyl lysine isopeptide (Lys-Gly) (interchain with G-Cter in ubiquitin) linkage. Positions G253–V358 are disordered. A compositionally biased stretch (acidic residues) spans S283–D297. S289 and S293 each carry phosphoserine. Over residues H305–P322 the composition is skewed to polar residues.

In terms of assembly, can form homooligomers. Interacts with PARsylated AXIN1, AXIN2, BLZF1, CASC3, H1-2, IPO7, LIG3, NCL, PARP1, XRCC1, XRCC5 and XRCC6. Interacts with DDB1, DHX15, IQGAP1, LRPPRC, PARP2, PRKDC, RUVBL2, TNKS1 and TNKS2. Binding often leads to interactor ubiquitination, in the presence of the appropriate E1 and E2 enzymes, and proteasomal degradation. Ubiquitinated; autoubiquitinated. Autoubiquitination is enhanced upon poly(ADP-ribose)-binding.

It is found in the cytoplasm. Its subcellular location is the cytosol. It localises to the nucleus. The catalysed reaction is S-ubiquitinyl-[E2 ubiquitin-conjugating enzyme]-L-cysteine + [acceptor protein]-L-lysine = [E2 ubiquitin-conjugating enzyme]-L-cysteine + N(6)-ubiquitinyl-[acceptor protein]-L-lysine.. The protein operates within protein modification; protein ubiquitination. Its function is as follows. E3 ubiquitin-protein ligase that specifically binds poly-ADP-ribosylated (PARsylated) proteins and mediates their ubiquitination and subsequent degradation. May regulate many important biological processes, such as cell survival and DNA damage response. Acts as an activator of the Wnt signaling pathway by mediating the ubiquitination of PARsylated AXIN1 and AXIN2, 2 key components of the beta-catenin destruction complex. Acts in cooperation with tankyrase proteins (TNKS and TNKS2), which mediate PARsylation of target proteins AXIN1, AXIN2, BLZF1, CASC3, TNKS and TNKS2. Recognizes and binds tankyrase-dependent PARsylated proteins via its WWE domain and mediates their ubiquitination, leading to their degradation. Different ubiquitin linkage types have been observed: TNKS2 undergoes ubiquitination at 'Lys-48' and 'Lys-63', while AXIN1 is only ubiquitinated at 'Lys-48'. May regulate TNKS and TNKS2 subcellular location, preventing aggregation at a centrosomal location. Neuroprotective protein. Protects the brain against N-methyl-D-aspartate (NMDA) receptor-mediated glutamate excitotoxicity and ischemia, by interfering with PAR-induced cell death, called parthanatos. Prevents nuclear translocation of AIFM1 in a PAR-binding dependent manner. Does not affect PARP1 activation. Protects against cell death induced by DNA damaging agents, such as N-methyl-N-nitro-N-nitrosoguanidine (MNNG) and rescues cells from G1 arrest. Promotes cell survival after gamma-irradiation. Facilitates DNA repair. This Pongo abelii (Sumatran orangutan) protein is E3 ubiquitin-protein ligase RNF146 (RNF146).